A 789-amino-acid chain; its full sequence is Bifunctional purine biosynthetic protein PUR2,5 (789 aa).

The segment at 1-428 (MEKINVLVVG…NRTDIAHRAF (428 aa)) is GARS. Residues 114–321 (KDFMKKHNIP…LLELMLATVE (208 aa)) form the ATP-grasp domain. Position 140–201 (140–201 (IANSSHNLVI…EEFLEGDELS (62 aa))) interacts with ATP. Mg(2+) is bound by residues glutamate 291 and asparagine 293. An AIRS region spans residues 438 to 773 (LTYEDAGVSV…TVYTIGKLVE (336 aa)).

In the N-terminal section; belongs to the GARS family. This sequence in the C-terminal section; belongs to the AIR synthase family. Requires Mg(2+) as cofactor. Mn(2+) is required as a cofactor.

It localises to the cytoplasm. The protein localises to the cytosol. The enzyme catalyses 2-formamido-N(1)-(5-O-phospho-beta-D-ribosyl)acetamidine + ATP = 5-amino-1-(5-phospho-beta-D-ribosyl)imidazole + ADP + phosphate + H(+). It carries out the reaction 5-phospho-beta-D-ribosylamine + glycine + ATP = N(1)-(5-phospho-beta-D-ribosyl)glycinamide + ADP + phosphate + H(+). The protein operates within purine metabolism; IMP biosynthesis via de novo pathway; 5-amino-1-(5-phospho-D-ribosyl)imidazole from N(2)-formyl-N(1)-(5-phospho-D-ribosyl)glycinamide: step 2/2. It participates in purine metabolism; IMP biosynthesis via de novo pathway; N(1)-(5-phospho-D-ribosyl)glycinamide from 5-phospho-alpha-D-ribose 1-diphosphate: step 2/2. Catalyzes the second and fifth step in the 'de novo' purine biosynthesis pathway; contains phosphoribosylamine--glycine ligase (GARS) and phosphoribosylformylglycinamidine cyclo-ligase (AIRS) activities. The sequence is that of Bifunctional purine biosynthetic protein PUR2,5 from Pichia angusta (Yeast).